The sequence spans 338 residues: 5-dehydro-2-deoxygluconokinase (338 aa).

It belongs to the carbohydrate kinase PfkB family.

It catalyses the reaction 5-dehydro-2-deoxy-D-gluconate + ATP = 6-phospho-5-dehydro-2-deoxy-D-gluconate + ADP + H(+). Its pathway is polyol metabolism; myo-inositol degradation into acetyl-CoA; acetyl-CoA from myo-inositol: step 5/7. Its function is as follows. Catalyzes the phosphorylation of 5-dehydro-2-deoxy-D-gluconate (2-deoxy-5-keto-D-gluconate or DKG) to 6-phospho-5-dehydro-2-deoxy-D-gluconate (DKGP). The polypeptide is 5-dehydro-2-deoxygluconokinase (Clostridium perfringens (strain ATCC 13124 / DSM 756 / JCM 1290 / NCIMB 6125 / NCTC 8237 / Type A)).